Here is a 673-residue protein sequence, read N- to C-terminus: Ion-translocating oxidoreductase complex subunit C (673 aa).

4Fe-4S ferredoxin-type domains lie at 368-397 (MGAP…QQLY) and 407-436 (KATA…VQYF). [4Fe-4S] cluster contacts are provided by Cys-377, Cys-380, Cys-383, Cys-387, Cys-416, Cys-419, Cys-422, and Cys-426. Positions 529–554 (EARKAQARAKQAGHPMADSATSGDDP) are disordered.

This sequence belongs to the 4Fe4S bacterial-type ferredoxin family. RnfC subfamily. In terms of assembly, the complex is composed of six subunits: RsxA, RsxB, RsxC, RsxD, RsxE and RsxG. The cofactor is [4Fe-4S] cluster.

It localises to the cell inner membrane. In terms of biological role, part of a membrane-bound complex that couples electron transfer with translocation of ions across the membrane. Required to maintain the reduced state of SoxR. The polypeptide is Ion-translocating oxidoreductase complex subunit C (Salmonella arizonae (strain ATCC BAA-731 / CDC346-86 / RSK2980)).